Here is a 283-residue protein sequence, read N- to C-terminus: Putative 4-diphosphocytidyl-2-C-methyl-D-erythritol kinase (283 aa).

The active site involves K10. 94–104 (PVCAGLGGGST) contributes to the ATP binding site. D136 is a catalytic residue.

This sequence belongs to the GHMP kinase family. IspE subfamily.

It catalyses the reaction 4-CDP-2-C-methyl-D-erythritol + ATP = 4-CDP-2-C-methyl-D-erythritol 2-phosphate + ADP + H(+). In terms of biological role, catalyzes the phosphorylation of the position 2 hydroxy group of 4-diphosphocytidyl-2C-methyl-D-erythritol. This is Putative 4-diphosphocytidyl-2-C-methyl-D-erythritol kinase (ispE) from Streptococcus agalactiae serotype Ia (strain ATCC 27591 / A909 / CDC SS700).